A 629-amino-acid chain; its full sequence is Extracellular metalloproteinase 10 (629 aa).

The N-terminal stretch at 1–19 (MHGLLLAAGLLSLPLYTIA) is a signal peptide. A propeptide spanning residues 20–240 (HTQPSGALSR…VHNVVDYVAH (221 aa)) is cleaved from the precursor. Asn281 and Asn331 each carry an N-linked (GlcNAc...) asparagine glycan. Position 424 (His424) interacts with Zn(2+). The active site involves Glu425. His428 provides a ligand contact to Zn(2+). N-linked (GlcNAc...) asparagine glycosylation is found at Asn469 and Asn617.

The protein belongs to the peptidase M36 family. Zn(2+) is required as a cofactor.

The protein resides in the secreted. Functionally, secreted metalloproteinase that allows assimilation of proteinaceous substrates and probably acts as a virulence factor. The polypeptide is Extracellular metalloproteinase 10 (MEP10) (Coccidioides posadasii (strain C735) (Valley fever fungus)).